Consider the following 259-residue polypeptide: MASQGPLVIAMRLRNQLQSVYKMDPLRNEEVVKVKIKELNEHIVCYLCAGYFIDATTITECLHTFCKSCIVKYLQTSKYCPLCNIKIHETQPLLNLKLDRVMQDIVYKLVPGLQENEDGRIRDFYHSRGLERVLQPSAVEDSVGDVSQLSLSLAVSQKTSHYYRNDEHVCLCLEKVSSGKDKKKFILEQKYVRCSVRSEIRHLRRVLSHRLSAPLAHVQLLIDNKVLPDHMTMKQLWLTHWYGKPAPLVLLYSVREKRR.

The segment at 45–84 (CYLCAGYFIDATTITECLHTFCKSCIVKYLQTSKYCPLCN) adopts an RING-type zinc-finger fold.

Component of a PRC1-like complex.

The protein localises to the nucleus. In terms of biological role, component of a Polycomb group (PcG) multiprotein PRC1-like complex, a complex class required to maintain the transcriptionally repressive state of many genes, including Hox genes, throughout development. PcG PRC1 complex acts via chromatin remodeling and modification of histones; it mediates monoubiquitination of histone H2A 'Lys-119', rendering chromatin heritably changed in its expressibility. This is Polycomb group RING finger protein 1 (pcgf1) from Xenopus tropicalis (Western clawed frog).